A 384-amino-acid chain; its full sequence is S-adenosylmethionine synthase (384 aa).

Residue His-15 coordinates ATP. Asp-17 provides a ligand contact to Mg(2+). Position 43 (Glu-43) interacts with K(+). Residues Glu-56 and Gln-99 each coordinate L-methionine. Residues 99 to 109 (QSPDINQGVDR) form a flexible loop region. Residues 164–166 (DAK), 230–231 (RF), Asp-239, 245–246 (RK), Ala-262, and Lys-266 each bind ATP. Asp-239 contacts L-methionine. Lys-270 serves as a coordination point for L-methionine.

The protein belongs to the AdoMet synthase family. As to quaternary structure, homotetramer; dimer of dimers. The cofactor is Mg(2+). Requires K(+) as cofactor.

It localises to the cytoplasm. It catalyses the reaction L-methionine + ATP + H2O = S-adenosyl-L-methionine + phosphate + diphosphate. It participates in amino-acid biosynthesis; S-adenosyl-L-methionine biosynthesis; S-adenosyl-L-methionine from L-methionine: step 1/1. Catalyzes the formation of S-adenosylmethionine (AdoMet) from methionine and ATP. The overall synthetic reaction is composed of two sequential steps, AdoMet formation and the subsequent tripolyphosphate hydrolysis which occurs prior to release of AdoMet from the enzyme. The chain is S-adenosylmethionine synthase from Yersinia enterocolitica serotype O:8 / biotype 1B (strain NCTC 13174 / 8081).